Reading from the N-terminus, the 89-residue chain is Small ribosomal subunit protein uS15 (89 aa).

Belongs to the universal ribosomal protein uS15 family. In terms of assembly, part of the 30S ribosomal subunit. Forms a bridge to the 50S subunit in the 70S ribosome, contacting the 23S rRNA.

One of the primary rRNA binding proteins, it binds directly to 16S rRNA where it helps nucleate assembly of the platform of the 30S subunit by binding and bridging several RNA helices of the 16S rRNA. Its function is as follows. Forms an intersubunit bridge (bridge B4) with the 23S rRNA of the 50S subunit in the ribosome. The protein is Small ribosomal subunit protein uS15 of Pseudoalteromonas atlantica (strain T6c / ATCC BAA-1087).